The primary structure comprises 428 residues: 26S proteasome regulatory subunit 6B homolog (428 aa).

Methionine 1 carries the N-acetylmethionine modification. 213–220 (GPPGTGKT) is a binding site for ATP. Residue lysine 280 forms a Glycyl lysine isopeptide (Lys-Gly) (interchain with G-Cter in ubiquitin) linkage.

Belongs to the AAA ATPase family. N-acetylated by NAT3.

The protein resides in the cytoplasm. It localises to the nucleus. In terms of biological role, the 26S proteasome is involved in the ATP-dependent degradation of ubiquitinated proteins. The regulatory (or ATPase) complex confers ATP dependency and substrate specificity to the 26S complex. The chain is 26S proteasome regulatory subunit 6B homolog (RPT3) from Saccharomyces cerevisiae (strain ATCC 204508 / S288c) (Baker's yeast).